Consider the following 437-residue polypeptide: 5-hydroxytryptamine receptor 3B (437 aa).

A signal peptide spans 1-21; it reads MILLWSCLLVAVVGILGTATP. Topologically, residues 22-235 are extracellular; that stretch reads QPGNSSLHRL…RFNVVIRRCP (214 aa). N-linked (GlcNAc...) asparagine glycans are attached at residues Asn25, Asn92, and Asn134. Residues Cys151 and Cys165 are joined by a disulfide bond. The chain crosses the membrane as a helical span at residues 236–255; sequence LAYVVSLLIPSIFLMLVDLG. The Cytoplasmic segment spans residues 256–266; the sequence is SFYLPPNCRAR. Residues 267 to 284 form a helical membrane-spanning segment; the sequence is IVFKTNVLVGYTVFRVNM. The Extracellular portion of the chain corresponds to 285–295; sequence SDEVPRSAGCT. Residues 296–324 traverse the membrane as a helical segment; sequence SLIGVFFTVCMALLVLSLSKSILLIKFLY. Residues 325–410 lie on the Cytoplasmic side of the membrane; it reads EERHSEQERP…WLAILCHFDQ (86 aa). Residues 377-409 are HA-stretch; determines single-channel conductance in 5-HT3 receptors; sequence FWFQLQSINNSLRTRDQVYQKEVEWLAILCHFD. Residues 411–434 traverse the membrane as a helical segment; the sequence is LLFRIYLAVLGLYTVTLCSLWALW. At 435–437 the chain is on the extracellular side; the sequence is SRM.

It belongs to the ligand-gated ion channel (TC 1.A.9) family. 5-hydroxytryptamine receptor (TC 1.A.9.2) subfamily. HTR3B sub-subfamily. In terms of assembly, forms homopentameric as well as heteropentameric serotonin-activated cation-selective channel complexes with HTR3A. The homomeric complex is not functional. Heteropentameric complexes display properties which resemble that of neuronal serotonin-activated channels in vivo. N-glycosylation is required for membrane localization. Expressed in peripheral neurons, but not in neurons of the central nervous system.

Its subcellular location is the postsynaptic cell membrane. It localises to the cell membrane. It carries out the reaction Na(+)(in) = Na(+)(out). The enzyme catalyses K(+)(in) = K(+)(out). It catalyses the reaction Ca(2+)(in) = Ca(2+)(out). Its function is as follows. Forms serotonin (5-hydroxytryptamine/5-HT3)-activated cation-selective channel complexes, which when activated cause fast, depolarizing responses in neurons. The protein is 5-hydroxytryptamine receptor 3B of Rattus norvegicus (Rat).